The primary structure comprises 221 residues: Probable glutathione S-transferase (221 aa).

One can recognise a GST N-terminal domain in the interval 4–83 (EEVILLDFWP…YIEEVWKDKA (80 aa)). Glutathione-binding positions include Ser-14, Lys-41, Ile-55, and 67-68 (ES). In terms of domain architecture, GST C-terminal spans 90 to 214 (DPYDRAQARF…PKVLEFVKVL (125 aa)).

It belongs to the GST superfamily. HSP26 family. In terms of tissue distribution, root tip-specific expression.

It catalyses the reaction RX + glutathione = an S-substituted glutathione + a halide anion + H(+). The polypeptide is Probable glutathione S-transferase (Nicotiana tabacum (Common tobacco)).